The chain runs to 246 residues: Cytochrome c oxidase subunit 2 (246 aa).

2 helical membrane passes run 31-51 (HMMY…YVMM) and 72-92 (IMWT…SFML). His-175, Cys-210, Glu-212, Cys-214, His-218, and Met-221 together coordinate Cu cation. Residue Glu-212 participates in Mg(2+) binding.

This sequence belongs to the cytochrome c oxidase subunit 2 family. As to quaternary structure, component of the cytochrome c oxidase (complex IV, CIV), a multisubunit enzyme composed of a catalytic core of 3 subunits and several supernumerary subunits. The complex exists as a monomer or a dimer and forms supercomplexes (SCs) in the inner mitochondrial membrane with ubiquinol-cytochrome c oxidoreductase (cytochrome b-c1 complex, complex III, CIII). The cofactor is Cu cation.

It is found in the mitochondrion inner membrane. It carries out the reaction 4 Fe(II)-[cytochrome c] + O2 + 8 H(+)(in) = 4 Fe(III)-[cytochrome c] + 2 H2O + 4 H(+)(out). In terms of biological role, component of the cytochrome c oxidase, the last enzyme in the mitochondrial electron transport chain which drives oxidative phosphorylation. The respiratory chain contains 3 multisubunit complexes succinate dehydrogenase (complex II, CII), ubiquinol-cytochrome c oxidoreductase (cytochrome b-c1 complex, complex III, CIII) and cytochrome c oxidase (complex IV, CIV), that cooperate to transfer electrons derived from NADH and succinate to molecular oxygen, creating an electrochemical gradient over the inner membrane that drives transmembrane transport and the ATP synthase. Cytochrome c oxidase is the component of the respiratory chain that catalyzes the reduction of oxygen to water. Electrons originating from reduced cytochrome c in the intermembrane space (IMS) are transferred via the dinuclear copper A center (CU(A)) of subunit 2 and heme A of subunit 1 to the active site in subunit 1, a binuclear center (BNC) formed by heme A3 and copper B (CU(B)). The BNC reduces molecular oxygen to 2 water molecules using 4 electrons from cytochrome c in the IMS and 4 protons from the mitochondrial matrix. The polypeptide is Cytochrome c oxidase subunit 2 (COX2) (Debaryomyces hansenii (strain ATCC 36239 / CBS 767 / BCRC 21394 / JCM 1990 / NBRC 0083 / IGC 2968) (Yeast)).